A 249-amino-acid chain; its full sequence is uncharacterized protein (249 aa).

7–14 (GKGGCGKS) lines the ATP pocket.

This is an uncharacterized protein from Methanocaldococcus jannaschii (strain ATCC 43067 / DSM 2661 / JAL-1 / JCM 10045 / NBRC 100440) (Methanococcus jannaschii).